The chain runs to 293 residues: Phosphoribosylaminoimidazole-succinocarboxamide synthase (293 aa).

Belongs to the SAICAR synthetase family.

The enzyme catalyses 5-amino-1-(5-phospho-D-ribosyl)imidazole-4-carboxylate + L-aspartate + ATP = (2S)-2-[5-amino-1-(5-phospho-beta-D-ribosyl)imidazole-4-carboxamido]succinate + ADP + phosphate + 2 H(+). It functions in the pathway purine metabolism; IMP biosynthesis via de novo pathway; 5-amino-1-(5-phospho-D-ribosyl)imidazole-4-carboxamide from 5-amino-1-(5-phospho-D-ribosyl)imidazole-4-carboxylate: step 1/2. This Bordetella parapertussis (strain 12822 / ATCC BAA-587 / NCTC 13253) protein is Phosphoribosylaminoimidazole-succinocarboxamide synthase.